The chain runs to 452 residues: GTPase Der (452 aa).

2 EngA-type G domains span residues 4–169 (PIVA…PPPE) and 177–352 (IKVA…EEHR). Residues 10–17 (GRPNVGKS), 57–61 (DTGGL), 120–123 (NKCE), 183–190 (GRPNVGKS), 230–234 (DTAGI), and 295–298 (NKWD) each bind GTP. Residues 353-438 (RRVTTAVINE…PIRLLWRGKK (86 aa)) enclose the KH-like domain.

It belongs to the TRAFAC class TrmE-Era-EngA-EngB-Septin-like GTPase superfamily. EngA (Der) GTPase family. As to quaternary structure, associates with the 50S ribosomal subunit.

Its function is as follows. GTPase that plays an essential role in the late steps of ribosome biogenesis. In Rippkaea orientalis (strain PCC 8801 / RF-1) (Cyanothece sp. (strain PCC 8801)), this protein is GTPase Der.